Reading from the N-terminus, the 300-residue chain is HTH-type transcriptional regulator ArgP (300 aa).

The region spanning 4 to 60 (PDYRTLQALDAVIRERGFERAAQKLCITQSAVSQRIKQLENLFGQPLLVRTVPPRPT) is the HTH lysR-type domain. A DNA-binding region (H-T-H motif) is located at residues 21–40 (FERAAQKLCITQSAVSQRIK).

This sequence belongs to the LysR transcriptional regulatory family. In terms of assembly, homodimer.

Functionally, controls the transcription of genes involved in arginine and lysine metabolism. The chain is HTH-type transcriptional regulator ArgP from Photorhabdus laumondii subsp. laumondii (strain DSM 15139 / CIP 105565 / TT01) (Photorhabdus luminescens subsp. laumondii).